Here is a 382-residue protein sequence, read N- to C-terminus: Sphingoid long-chain base transporter RSB1 (382 aa).

Over 1 to 34 the chain is Extracellular; it reads MSNATNNTLGSLLPQLEAAANSNSLYGGMVPNLR. 2 N-linked (GlcNAc...) asparagine glycosylation sites follow: N3 and N6. A helical transmembrane segment spans residues 35–55; the sequence is FNITMIVIWGILLTIHVVQLL. Residues 56 to 57 are Cytoplasmic-facing; sequence MR. A helical transmembrane segment spans residues 58 to 78; the sequence is QYWFSIAFICTGILEVLGFIG. Over 79–90 the chain is Extracellular; that stretch reads RTWSHSNVADMD. The chain crosses the membrane as a helical span at residues 91–111; the sequence is AFLLNMICLTIAPVFTMGGIY. Topologically, residues 112–135 are cytoplasmic; sequence YQLAKLIEVYGHRFSLLPSPMAYS. Residues 136–156 form a helical membrane-spanning segment; it reads FIFICSDIVSLVVQAVGGGLC. At 157–171 the chain is on the extracellular side; it reads GVAVTDGTSTTTGNH. The chain crosses the membrane as a helical span at residues 172–192; it reads VFIAGLAIQVASMAIFLMLWF. The Cytoplasmic portion of the chain corresponds to 193–241; that stretch reads HFLFRIYISVRWEHINSRPISLSLLKISQTEVDYLYREKFHFLRLEPKR. A helical membrane pass occupies residues 242–262; sequence WVFHYFNLAITVAVLTIFTRC. The Extracellular segment spans residues 263–281; it reads CYRLAELVVGWDGYLITHE. The chain crosses the membrane as a helical span at residues 282 to 302; sequence WYFIILDALMMAIATVTLTIF. The Cytoplasmic portion of the chain corresponds to 303–382; it reads HPGFAFKGKS…LFSSKKKAKL (80 aa).

It belongs to the lipid-translocating exporter (LTE) (TC 9.A.26.1) family.

It is found in the cell membrane. Catalyzes the ATP-dependent translocation of sphingoid long-chain bases (LCBs) from the cytoplasmic site toward the extracytoplasmic side of the membrane (flip-flop). Involved in the establishment of the functional lipid asymmetry of the plasma membrane. Regulates intracellular levels of LCBs, sphingolipid precursors that are growth inhibitory at increased levels. The chain is Sphingoid long-chain base transporter RSB1 (RSB1) from Saccharomyces cerevisiae (strain JAY291) (Baker's yeast).